A 557-amino-acid chain; its full sequence is Predicted GPI-anchored protein 17 (557 aa).

The N-terminal stretch at 1-19 is a signal peptide; the sequence is MKFSTVFTAIFALGTAVSA. Asn62, Asn116, Asn284, and Asn309 each carry an N-linked (GlcNAc...) asparagine glycan. A coiled-coil region spans residues 320–355; sequence LRKREYNDAVEAALRDIQKREEGIDDVEIALRKMKR. Residues Asn376, Asn471, and Asn520 are each glycosylated (N-linked (GlcNAc...) asparagine). A lipid anchor (GPI-anchor amidated asparagine) is attached at Asn533. Residues 534 to 557 constitute a propeptide, removed in mature form; the sequence is AGSSYGPGFYSTIFAVFGLFAMMI.

In terms of processing, substrate for cleavage by KEX2 in vitro.

It is found in the cell membrane. Its function is as follows. Predicted GPI-anchored protein which may have a role during host infection. The polypeptide is Predicted GPI-anchored protein 17 (PGA17) (Candida albicans (strain SC5314 / ATCC MYA-2876) (Yeast)).